A 162-amino-acid chain; its full sequence is 2-amino-4-hydroxy-6-hydroxymethyldihydropteridine pyrophosphokinase (162 aa).

The protein belongs to the HPPK family.

It carries out the reaction 6-hydroxymethyl-7,8-dihydropterin + ATP = (7,8-dihydropterin-6-yl)methyl diphosphate + AMP + H(+). The protein operates within cofactor biosynthesis; tetrahydrofolate biosynthesis; 2-amino-4-hydroxy-6-hydroxymethyl-7,8-dihydropteridine diphosphate from 7,8-dihydroneopterin triphosphate: step 4/4. Catalyzes the transfer of pyrophosphate from adenosine triphosphate (ATP) to 6-hydroxymethyl-7,8-dihydropterin, an enzymatic step in folate biosynthesis pathway. In Pseudomonas aeruginosa (strain ATCC 15692 / DSM 22644 / CIP 104116 / JCM 14847 / LMG 12228 / 1C / PRS 101 / PAO1), this protein is 2-amino-4-hydroxy-6-hydroxymethyldihydropteridine pyrophosphokinase (folK).